The following is a 152-amino-acid chain: Transcriptional regulator MraZ (152 aa).

SpoVT-AbrB domains follow at residues A5–E52 and A81–A124.

It belongs to the MraZ family. As to quaternary structure, forms oligomers.

It localises to the cytoplasm. It is found in the nucleoid. The polypeptide is Transcriptional regulator MraZ (Shewanella piezotolerans (strain WP3 / JCM 13877)).